The sequence spans 549 residues: Glutamyl-tRNA(Gln) amidotransferase subunit B, chloroplastic/mitochondrial (549 aa).

The protein belongs to the GatB/GatE family. GatB subfamily. Subunit of the heterotrimeric GatCAB amidotransferase (AdT) complex, composed of A, B and C subunits.

The protein localises to the mitochondrion. The protein resides in the plastid. It is found in the chloroplast. The catalysed reaction is L-glutamyl-tRNA(Gln) + L-glutamine + ATP + H2O = L-glutaminyl-tRNA(Gln) + L-glutamate + ADP + phosphate + H(+). Its function is as follows. Allows the formation of correctly charged Gln-tRNA(Gln) through the transamidation of misacylated Glu-tRNA(Gln) in chloroplasts and mitochondria. The reaction takes place in the presence of glutamine and ATP through an activated gamma-phospho-Glu-tRNA(Gln). The sequence is that of Glutamyl-tRNA(Gln) amidotransferase subunit B, chloroplastic/mitochondrial from Ricinus communis (Castor bean).